Consider the following 300-residue polypeptide: 33 kDa chaperonin (300 aa).

2 disulfides stabilise this stretch: cysteine 235/cysteine 237 and cysteine 269/cysteine 272.

The protein belongs to the HSP33 family. Under oxidizing conditions two disulfide bonds are formed involving the reactive cysteines. Under reducing conditions zinc is bound to the reactive cysteines and the protein is inactive.

The protein localises to the cytoplasm. Its function is as follows. Redox regulated molecular chaperone. Protects both thermally unfolding and oxidatively damaged proteins from irreversible aggregation. Plays an important role in the bacterial defense system toward oxidative stress. The protein is 33 kDa chaperonin of Pseudomonas syringae pv. syringae (strain B728a).